The sequence spans 532 residues: Cytochrome c oxidase subunit 1 (532 aa).

The next 3 membrane-spanning stretches (helical) occupy residues 1–21, 27–47, and 69–89; these read MWDY…AYAA, LPYM…LIWV, and GVIA…VIAF. Residue histidine 114 participates in heme b binding. Helical transmembrane passes span 115-135, 143-163, 185-205, 212-232, 263-283, 296-316, 328-348, and 366-386; these read TSAV…FYVV, LFGG…IIVT, LDIL…GTIF, IYVA…LHIV, GHNA…YYFV, LSIV…PHHL, LGMV…INGL, and MMVV…MMSI. Residues histidine 264, histidine 314, and histidine 315 each coordinate Cu cation. Positions 402 and 404 each coordinate heme b. The next 3 helical transmembrane spans lie at 403–423, 442–462, and 496–516; these read VHSG…YFLT, FWLA…TGIM, and VGGV…WATV.

This sequence belongs to the heme-copper respiratory oxidase family. Cu(2+) serves as cofactor. It depends on heme b as a cofactor.

The protein resides in the cell membrane. The enzyme catalyses 4 Fe(II)-[cytochrome c] + O2 + 8 H(+)(in) = 4 Fe(III)-[cytochrome c] + 2 H2O + 4 H(+)(out). It functions in the pathway energy metabolism; oxidative phosphorylation. In terms of biological role, cytochrome c oxidase is the component of the respiratory chain that catalyzes the reduction of oxygen to water. Subunits 1-3 form the functional core of the enzyme complex. Co I is the catalytic subunit of the enzyme. Electrons originating in cytochrome c are transferred via the copper A center of subunit 2 and heme a of subunit 1 to the bimetallic center formed by heme a3 and copper B. This cytochrome c oxidase shows proton pump activity across the membrane in addition to the electron transfer. The chain is Cytochrome c oxidase subunit 1 (ctaD) from Rhodobacter capsulatus (Rhodopseudomonas capsulata).